A 101-amino-acid polypeptide reads, in one-letter code: Ascorbate-specific PTS system EIIB component (101 aa).

Residues 1–100 (MTVRILAVCG…VIKEHFPQDV (100 aa)) enclose the PTS EIIB type-2 domain. Catalysis depends on cysteine 9, which acts as the Phosphocysteine intermediate. The residue at position 9 (cysteine 9) is a Phosphocysteine.

Its subcellular location is the cytoplasm. It carries out the reaction N(pros)-phospho-L-histidyl-[protein] + L-ascorbate(out) = L-ascorbate 6-phosphate(in) + L-histidyl-[protein]. Functionally, the phosphoenolpyruvate-dependent sugar phosphotransferase system (sugar PTS), a major carbohydrate active transport system, catalyzes the phosphorylation of incoming sugar substrates concomitantly with their translocation across the cell membrane. The enzyme II UlaABC PTS system is involved in ascorbate transport. This Escherichia coli O157:H7 protein is Ascorbate-specific PTS system EIIB component (ulaB).